Reading from the N-terminus, the 284-residue chain is Bifunctional protein FolD (284 aa).

NADP(+)-binding positions include 165 to 167 (GRS), S190, and V231.

It belongs to the tetrahydrofolate dehydrogenase/cyclohydrolase family. Homodimer.

The enzyme catalyses (6R)-5,10-methylene-5,6,7,8-tetrahydrofolate + NADP(+) = (6R)-5,10-methenyltetrahydrofolate + NADPH. It catalyses the reaction (6R)-5,10-methenyltetrahydrofolate + H2O = (6R)-10-formyltetrahydrofolate + H(+). It functions in the pathway one-carbon metabolism; tetrahydrofolate interconversion. Its function is as follows. Catalyzes the oxidation of 5,10-methylenetetrahydrofolate to 5,10-methenyltetrahydrofolate and then the hydrolysis of 5,10-methenyltetrahydrofolate to 10-formyltetrahydrofolate. The sequence is that of Bifunctional protein FolD from Geobacillus kaustophilus (strain HTA426).